A 445-amino-acid chain; its full sequence is Probable glycine dehydrogenase (decarboxylating) subunit 1 (445 aa).

The protein belongs to the GcvP family. N-terminal subunit subfamily. In terms of assembly, the glycine cleavage system is composed of four proteins: P, T, L and H. In this organism, the P 'protein' is a heterodimer of two subunits.

It catalyses the reaction N(6)-[(R)-lipoyl]-L-lysyl-[glycine-cleavage complex H protein] + glycine + H(+) = N(6)-[(R)-S(8)-aminomethyldihydrolipoyl]-L-lysyl-[glycine-cleavage complex H protein] + CO2. Its function is as follows. The glycine cleavage system catalyzes the degradation of glycine. The P protein binds the alpha-amino group of glycine through its pyridoxal phosphate cofactor; CO(2) is released and the remaining methylamine moiety is then transferred to the lipoamide cofactor of the H protein. This Anaeromyxobacter sp. (strain Fw109-5) protein is Probable glycine dehydrogenase (decarboxylating) subunit 1.